Here is a 392-residue protein sequence, read N- to C-terminus: Heat-inducible transcription repressor HrcA (392 aa).

It belongs to the HrcA family.

Negative regulator of class I heat shock genes (grpE-dnaK-dnaJ and groELS operons). Prevents heat-shock induction of these operons. The protein is Heat-inducible transcription repressor HrcA of Chlamydia trachomatis serovar A (strain ATCC VR-571B / DSM 19440 / HAR-13).